Consider the following 177-residue polypeptide: ATP synthase subunit delta (177 aa).

Belongs to the ATPase delta chain family. In terms of assembly, F-type ATPases have 2 components, F(1) - the catalytic core - and F(0) - the membrane proton channel. F(1) has five subunits: alpha(3), beta(3), gamma(1), delta(1), epsilon(1). F(0) has three main subunits: a(1), b(2) and c(10-14). The alpha and beta chains form an alternating ring which encloses part of the gamma chain. F(1) is attached to F(0) by a central stalk formed by the gamma and epsilon chains, while a peripheral stalk is formed by the delta and b chains.

The protein resides in the cell inner membrane. Functionally, f(1)F(0) ATP synthase produces ATP from ADP in the presence of a proton or sodium gradient. F-type ATPases consist of two structural domains, F(1) containing the extramembraneous catalytic core and F(0) containing the membrane proton channel, linked together by a central stalk and a peripheral stalk. During catalysis, ATP synthesis in the catalytic domain of F(1) is coupled via a rotary mechanism of the central stalk subunits to proton translocation. In terms of biological role, this protein is part of the stalk that links CF(0) to CF(1). It either transmits conformational changes from CF(0) to CF(1) or is implicated in proton conduction. The polypeptide is ATP synthase subunit delta (Shewanella denitrificans (strain OS217 / ATCC BAA-1090 / DSM 15013)).